The following is a 589-amino-acid chain: Probable translation initiation factor IF-2 (589 aa).

The tr-type G domain occupies 3–224; that stretch reads VRSPFVVVMG…AGVSQRFIPR (222 aa). Positions 12-19 are G1; that stretch reads GHVDVGKT. Position 12–19 (12–19) interacts with GTP; that stretch reads GHVDVGKT. The tract at residues 37-41 is G2; the sequence is MITQH. Residues 78 to 81 form a G3 region; it reads DTPG. GTP is bound by residues 78-82 and 132-135; these read DTPGH and NKLD. The G4 stretch occupies residues 132–135; sequence NKLD. The G5 stretch occupies residues 200–202; that stretch reads SAV.

This sequence belongs to the TRAFAC class translation factor GTPase superfamily. Classic translation factor GTPase family. IF-2 subfamily.

Functionally, function in general translation initiation by promoting the binding of the formylmethionine-tRNA to ribosomes. Seems to function along with eIF-2. This Pyrobaculum neutrophilum (strain DSM 2338 / JCM 9278 / NBRC 100436 / V24Sta) (Thermoproteus neutrophilus) protein is Probable translation initiation factor IF-2.